A 189-amino-acid polypeptide reads, in one-letter code: High affinity copper uptake protein 1 (189 aa).

Over 1–67 the chain is Extracellular; the sequence is MDHSAHMGMS…AGLVINTAGE (67 aa). The Methionine segments (Mets) motif signature appears at 13–18; sequence MGMSDM. The tract at residues 15 to 36 is disordered; sequence MSDMNHSTTMPPSHHHPTSSGS. The segment covering 20 to 36 has biased composition (low complexity); sequence HSTTMPPSHHHPTSSGS. Residues 68-88 traverse the membrane as a helical segment; it reads MAGAFVAVFLLAMFYEGLKIA. Residues 89 to 131 lie on the Cytoplasmic side of the membrane; the sequence is REGLLRKSQVSIRYNSMPVPGPNGTILMETHKTVGQQMLSFPH. Threonine 113 is subject to Phosphothreonine. The chain crosses the membrane as a helical span at residues 132–152; sequence LLQTVLHIIQVVISYFLMLIF. Over 153–155 the chain is Extracellular; that stretch reads MTY. The chain crosses the membrane as a helical span at residues 156–176; that stretch reads NGYLCIAVAAGAGTGYFLFSW. Residues 177 to 189 are Cytoplasmic-facing; it reads KKAVVVDITEHCH. Cysteine 188 is subject to Cysteine sulfenic acid (-SOH).

This sequence belongs to the copper transporter (Ctr) (TC 1.A.56) family. SLC31A subfamily. Homotrimer; is stabilized by cisplatin via interactions between cisplatin and the methionine-rich clusters, and could be crucial for the copper(2+) reduction process and copper(1+) stabilization. Heterotrimer between SLC31A1, CCS and SOD1; this heterotrimer is copper(1+)-mediated and its maintenance is regulated through SOD1 activation. Interacts with KDR; this interaction is induced upon VEGFA stimulation leading to SLC31A1 and KDR subsequent co-internalization to early endosomes, thereby activating KDR downstream signaling in endothelial cells. Interacts (via C-terminal domain) with ATOX1 (via dimer form); this interaction improves ATOX1 stability and controls intracellular copper(1+) levels. Interacts with SLC31A2; this interaction stabilizes SLC31A2 and protects its from ubiquitination and degradation. Interacts (via C-terminal domain) with CCS; this interaction is copper(1+)-mediated. Proteolytic cleavage, leading to a truncated form, is facilitated by SLC31A2 and initiated preferentially by CTSL and to a minor extend by CTSB in endolysosomal compartments. A post-CTSL/cathepsin L processing occurs to yield to the fully truncated form. Post-translationally, sulfenylated at Cys-188 after stimulation with VEGFA, which induces SLC31A1-KDR disulfide bond formation and their co-internalization to early endosomes, driving to a sustained VEGFR2 signaling.

It localises to the cell membrane. The protein localises to the early endosome membrane. Its subcellular location is the recycling endosome membrane. It is found in the apical cell membrane. The protein resides in the late endosome membrane. It localises to the basolateral cell membrane. The enzyme catalyses Ag(+)(out) = Ag(+)(in). It carries out the reaction Cu(+)(out) = Cu(+)(in). Functionally, uniporter that mediates the transport of copper(1+) from the extracellular space to the cytoplasm, across the plasma membrane and delivers directly copper(1+) to specific chaperone such as ATOX1, via a copper(1+)- mediated transient interaction between the C-terminal domain and a copper(1+) chaperone, thus controlling intracellular copper(1+) levels. May function in copper(1+) import from the apical membrane thus may drive intestinal copper absorption. The copper(1+) transport mechanism is sodium-independent, saturable and of high-affinity. Also mediates the uptake of silver(1+). May function in the influx of the platinum-containing chemotherapeutic agents. The platinum-containing chemotherapeutic agents uptake is saturable. In vitro, mediates the transport of cadmium(2+) into cells. Also participates in the first step of copper(2+) acquisition by cells through a direct transfer of copper(2+) from copper(2+) carriers in blood, such as ALB to the N-terminal domain of SLC31A1, leading to copper(2+) reduction and probably followed by copper(1+) stabilization. In addition, functions as a redox sensor to promote angiogenesis in endothelial cells, in a copper(1+) transport independent manner, by transmitting the VEGF-induced ROS signal through a sulfenylation at Cys-189 leadin g to a subsequent disulfide bond formation between SLC31A1 and KDR. The SLC31A1-KDR complex is then co-internalized to early endosomes, driving a sustained VEGFR2 signaling. Mobilizes copper(1+) out of the endosomal compartment, making copper(1+) available for export out of the cells. The polypeptide is High affinity copper uptake protein 1 (Sus scrofa (Pig)).